A 305-amino-acid polypeptide reads, in one-letter code: Hepatitis A virus cellular receptor 1 homolog (305 aa).

The signal sequence occupies residues 1-21; it reads MNQIQVFISGLILLLPGAVDS. The region spanning 22 to 122 is the Ig-like V-type domain; sequence YVEVKGVVGH…PGWFNDQKVT (101 aa). Over 22–237 the chain is Extracellular; sequence YVEVKGVVGH…GKPQKNPTKG (216 aa). Disulfide bonds link Cys37/Cys108, Cys49/Cys60, and Cys55/Cys107. A disordered region spans residues 129 to 185; it reads PEIPTRPPTRPTTTRPTATGRPTTISTRSTHVPTSIRVSTSTPPTSTHTWTHKPEPT. Low complexity-rich tracts occupy residues 139 to 152 and 161 to 177; these read PTTT…RPTT and PTSI…STHT. An N-linked (GlcNAc...) asparagine glycan is attached at Asn208. A helical membrane pass occupies residues 238–258; the sequence is FYVGICIAALLLLLLVSTVAI. Residues 259 to 305 lie on the Cytoplasmic side of the membrane; it reads TRYILMKRKSASLSVVAFRVSKIEALQNAAVVHSRAEDNIYIVEDRP.

The protein belongs to the immunoglobulin superfamily. TIM family. As to quaternary structure, interacts with STAM. Interacts with SELPLG. As to expression, expressed by stimulated T-cells. Expressed during primary antigen stimulation. Expressed at higher levels on B rather than T-cells, both constitutively and after activation.

Its subcellular location is the cell membrane. Phosphatidylserine receptor that plays an important functional role in regulatory B-cells homeostasis including generation, expansion and suppressor functions. As P-selectin/SELPLG ligand, plays a specialized role in activated but not naive T-cell trafficking during inflammatory responses. Controls thereby T-cell accumulation in the inflamed central nervous system (CNS) and the induction of autoimmune disease. Also regulates expression of various anti-inflammatory cytokines and co-inhibitory ligands including IL10. Acts as a regulator of T-cell proliferation. May play a role in kidney injury and repair. The protein is Hepatitis A virus cellular receptor 1 homolog (Havcr1) of Mus musculus (Mouse).